We begin with the raw amino-acid sequence, 443 residues long: Trihelix transcription factor ASIL2 (443 aa).

The interval 1–82 (MEDDEDIRSQ…RPTGGGGRED (82 aa)) is disordered. Residues 38–48 (YSLTPPGNSSQ) show a composition bias toward polar residues. The span at 64-78 (SGGGNNSSGRPTGGG) shows a compositional bias: gly residues. Positions 84 to 144 (WSEAATAVLI…QCKNRIDTVK (61 aa)) constitute a Myb-like domain. Disordered regions lie at residues 238–350 (FGGS…GNKW) and 413–443 (RRMG…LGNN). The span at 239–249 (GGSGGGGGGGS) shows a compositional bias: gly residues. The segment covering 271–286 (TLPQQGRTLPQQQQQG) has biased composition (low complexity). The Bipartite nuclear localization signal motif lies at 290–303 (KRCSESKRWRFRKR). Residues 333-350 (MKTEEKKKQDGDGVGNKW) show a composition bias toward basic and acidic residues. The stretch at 360 to 414 (FGEAYEQTENAKLQQVVEMEKERMKFLKELELQRMQFFVKTQLEISQLKQQHGRR) forms a coiled coil. Residues 428–443 (NNINAIVNNNNDLGNN) are compositionally biased toward low complexity.

Its subcellular location is the nucleus. Transcription regulator that may repress the maturation program during early embryogenesis. The polypeptide is Trihelix transcription factor ASIL2 (Arabidopsis thaliana (Mouse-ear cress)).